We begin with the raw amino-acid sequence, 364 residues long: Fructose-bisphosphate aldolase C (364 aa).

Tyrosine 5 is subject to Phosphotyrosine. 3 positions are modified to phosphoserine: serine 36, serine 39, and serine 45. Arginine 56 contributes to the substrate binding site. Lysine 111 carries the N6-acetyllysine modification. The residue at position 132 (serine 132) is a Phosphoserine. Lysine 147 is a binding site for substrate. Glutamate 188 serves as the catalytic Proton acceptor. The active-site Schiff-base intermediate with dihydroxyacetone-P is lysine 230.

It belongs to the class I fructose-bisphosphate aldolase family. Homotetramer. Interacts with ATP6V1E1. May interact with PLD2.

The catalysed reaction is beta-D-fructose 1,6-bisphosphate = D-glyceraldehyde 3-phosphate + dihydroxyacetone phosphate. Its pathway is carbohydrate degradation; glycolysis; D-glyceraldehyde 3-phosphate and glycerone phosphate from D-glucose: step 4/4. The protein is Fructose-bisphosphate aldolase C (ALDOC) of Homo sapiens (Human).